Reading from the N-terminus, the 245-residue chain is Biosynthetic peptidoglycan transglycosylase (245 aa).

A helical membrane pass occupies residues 19 to 41; sequence CLRWVLAAPLLFAAASVLQVLFL.

This sequence belongs to the glycosyltransferase 51 family.

Its subcellular location is the cell inner membrane. It catalyses the reaction [GlcNAc-(1-&gt;4)-Mur2Ac(oyl-L-Ala-gamma-D-Glu-L-Lys-D-Ala-D-Ala)](n)-di-trans,octa-cis-undecaprenyl diphosphate + beta-D-GlcNAc-(1-&gt;4)-Mur2Ac(oyl-L-Ala-gamma-D-Glu-L-Lys-D-Ala-D-Ala)-di-trans,octa-cis-undecaprenyl diphosphate = [GlcNAc-(1-&gt;4)-Mur2Ac(oyl-L-Ala-gamma-D-Glu-L-Lys-D-Ala-D-Ala)](n+1)-di-trans,octa-cis-undecaprenyl diphosphate + di-trans,octa-cis-undecaprenyl diphosphate + H(+). It functions in the pathway cell wall biogenesis; peptidoglycan biosynthesis. In terms of biological role, peptidoglycan polymerase that catalyzes glycan chain elongation from lipid-linked precursors. This Xanthomonas oryzae pv. oryzae (strain KACC10331 / KXO85) protein is Biosynthetic peptidoglycan transglycosylase.